A 195-amino-acid chain; its full sequence is 4'-phosphopantetheinyl transferase AcpT (195 aa).

Belongs to the P-Pant transferase superfamily. Gsp/Sfp/HetI/AcpT family.

The catalysed reaction is apo-[ACP] + CoA = holo-[ACP] + adenosine 3',5'-bisphosphate + H(+). May be involved in an alternative pathway for phosphopantetheinyl transfer and holo-ACP synthesis in E.coli. The native apo-protein substrate is unknown. Is able to functionally replace AcpS in vivo but only when expressed at high levels. In Escherichia coli (strain K12), this protein is 4'-phosphopantetheinyl transferase AcpT.